A 430-amino-acid polypeptide reads, in one-letter code: MQASIESTGNLERRLTFTLPQERLETHVGGRLRELARTTRIKGFRPGKVPTKVIEQRFGQQVRAEAMEGLLRETFDSAVREHSLRLAGNPRIDQGETDFDFVATFEVVPDFGDIDVTKLSVVRATAEVTDADIDQMIENLRLQRRTWNPVERGAQVGDLVALETWSQAGDERLPAEGVETGSSVLGSGVMFDQIEKGLEGLTKGEEKTLTVDFPAEWRVPQLAGKTVQVHVKAVEVSEPVLPAVDKEFIKSFGVKSGDAEQFRADIRTNLERELKGALMNRLRREVGEQLIAAYAHVEMPPRLVENEARSMLAQQVEQVRRSGRDPGQVPADAHQGFMDAAAKRVLVGLLVGEVARRNELRLESKRVSETLRLIASTYEEPEQVIEMYRNDPQLMNGLQSRVMEEQVIDWIAERAQHTEQSLSFQDAIRV.

The 86-residue stretch at 157-242 (GDLVALETWS…AVEVSEPVLP (86 aa)) folds into the PPIase FKBP-type domain.

Belongs to the FKBP-type PPIase family. Tig subfamily.

Its subcellular location is the cytoplasm. It carries out the reaction [protein]-peptidylproline (omega=180) = [protein]-peptidylproline (omega=0). Functionally, involved in protein export. Acts as a chaperone by maintaining the newly synthesized protein in an open conformation. Functions as a peptidyl-prolyl cis-trans isomerase. The polypeptide is Trigger factor (Xanthomonas euvesicatoria pv. vesicatoria (strain 85-10) (Xanthomonas campestris pv. vesicatoria)).